The following is a 1165-amino-acid chain: Disease resistance protein RPS4B (1165 aa).

A TIR domain is found at 12-174 (PQHQVFINFR…EIVKEVKKVL (163 aa)). The active site involves E86. The NB-ARC domain occupies 211-474 (KQRLKELEEK…FLDIACFRSQ (264 aa)). The stretch at 592 to 613 (SHCPHECLTNNKINMPDGLELP) is one LRR 1 repeat. Residues 614–635 (LKEVRCLHWLKFPLEELPNDFD) form an LRR 2; degenerate repeat. 6 LRR repeats span residues 636-659 (PINL…VKDT), 684-703 (NLQR…RDVN), 704-725 (LTSL…PLIP), 726-748 (ENLK…VGNL), 772-794 (LKTL…EINK), and 795-818 (SSLK…SVQY). The LRR 9; degenerate repeat unit spans residues 819 to 836 (LCLSRNDHLIYLPAGINQ). An LRR 10 repeat occupies 837–863 (VSQLTRLDLKYCTKLTYVPELPPTLQY).

This sequence belongs to the disease resistance TIR-NB-LRR family. In terms of assembly, interacts with RRS1B. RPS4B-RRS1B heterodimer interacts with the bacterial effectors AvrRps4 and PopP2.

The protein resides in the nucleus. The catalysed reaction is NAD(+) + H2O = ADP-D-ribose + nicotinamide + H(+). Disease resistance (R) protein that specifically recognizes the AvrRps4 type III effector avirulence protein from P.syringae. Heterodimerization with RRS1B is required to form a functional complex to recognize AvrRps4 and to mediate the hypersensitive response. This Arabidopsis thaliana (Mouse-ear cress) protein is Disease resistance protein RPS4B.